We begin with the raw amino-acid sequence, 115 residues long: MPKANNAVASKARRKRVLKKAKGYWGSRGNILTVVKHAVDKGEQYAYRDRRAKKRSFRSLWIIRINAAARLNGTTYSRLMDAMIKKNVEIDRKTMAEIAVRDPEAFTQLVKTIID.

This sequence belongs to the bacterial ribosomal protein bL20 family.

Functionally, binds directly to 23S ribosomal RNA and is necessary for the in vitro assembly process of the 50S ribosomal subunit. It is not involved in the protein synthesizing functions of that subunit. The chain is Large ribosomal subunit protein bL20 from Chlorobium luteolum (strain DSM 273 / BCRC 81028 / 2530) (Pelodictyon luteolum).